We begin with the raw amino-acid sequence, 72 residues long: Translation initiation factor IF-1 (72 aa).

One can recognise an S1-like domain in the interval 1-72 (MSKEEVLEFS…TKGRITYRYK (72 aa)).

Belongs to the IF-1 family. Component of the 30S ribosomal translation pre-initiation complex which assembles on the 30S ribosome in the order IF-2 and IF-3, IF-1 and N-formylmethionyl-tRNA(fMet); mRNA recruitment can occur at any time during PIC assembly.

The protein resides in the cytoplasm. One of the essential components for the initiation of protein synthesis. Stabilizes the binding of IF-2 and IF-3 on the 30S subunit to which N-formylmethionyl-tRNA(fMet) subsequently binds. Helps modulate mRNA selection, yielding the 30S pre-initiation complex (PIC). Upon addition of the 50S ribosomal subunit IF-1, IF-2 and IF-3 are released leaving the mature 70S translation initiation complex. The sequence is that of Translation initiation factor IF-1 from Bartonella tribocorum (strain CIP 105476 / IBS 506).